A 142-amino-acid chain; its full sequence is Class II hydrophobin 7 (142 aa).

The first 16 residues, 1–16 (MKFLTVAIVLAAAASA), serve as a signal peptide directing secretion. 4 disulfides stabilise this stretch: Cys-73-Cys-123, Cys-84-Cys-114, Cys-85-Cys-97, and Cys-124-Cys-135.

It belongs to the cerato-ulmin hydrophobin family. Homodimer. Homodimers further self-assemble to form highly ordered films at water-air interfaces through intermolecular interactions.

It localises to the secreted. Its subcellular location is the cell wall. Functionally, aerial growth, conidiation, and dispersal of filamentous fungi in the environment rely upon a capability of their secreting small amphipathic proteins called hydrophobins (HPBs) with low sequence identity. Class I can self-assemble into an outermost layer of rodlet bundles on aerial cell surfaces, conferring cellular hydrophobicity that supports fungal growth, development and dispersal; whereas Class II form highly ordered films at water-air interfaces through intermolecular interactions but contribute nothing to the rodlet structure. In Trichoderma asperellum (strain ATCC 204424 / CBS 433.97 / NBRC 101777), this protein is Class II hydrophobin 7.